The primary structure comprises 118 residues: Large ribosomal subunit protein uL18 (118 aa).

The interval methionine 1–glycine 24 is disordered. A compositionally biased stretch (basic residues) spans isoleucine 10–glycine 20.

This sequence belongs to the universal ribosomal protein uL18 family. In terms of assembly, part of the 50S ribosomal subunit; part of the 5S rRNA/L5/L18/L25 subcomplex. Contacts the 5S and 23S rRNAs.

Its function is as follows. This is one of the proteins that bind and probably mediate the attachment of the 5S RNA into the large ribosomal subunit, where it forms part of the central protuberance. The chain is Large ribosomal subunit protein uL18 from Streptococcus mutans serotype c (strain ATCC 700610 / UA159).